The chain runs to 331 residues: Glutamyl-Q tRNA(Asp) synthetase (331 aa).

The span at 1 to 30 (MVQQAVIQRSANQQLSNQRSANQRATNQPT) shows a compositional bias: polar residues. Positions 1–36 (MVQQAVIQRSANQQLSNQRSANQRATNQPTEYVGRF) are disordered. Residues 35–39 (RFAPS) and Glu71 contribute to the L-glutamate site. The 'HIGH' region signature appears at 38-48 (PSPSGDLHFGS). Positions 127, 129, 141, and 145 each coordinate Zn(2+). Positions 198 and 216 each coordinate L-glutamate. Positions 254–258 (KLSKQ) match the 'KMSKS' region motif. Position 257 (Lys257) interacts with ATP.

The protein belongs to the class-I aminoacyl-tRNA synthetase family. GluQ subfamily. Requires Zn(2+) as cofactor.

Functionally, catalyzes the tRNA-independent activation of glutamate in presence of ATP and the subsequent transfer of glutamate onto a tRNA(Asp). Glutamate is transferred on the 2-amino-5-(4,5-dihydroxy-2-cyclopenten-1-yl) moiety of the queuosine in the wobble position of the QUC anticodon. The sequence is that of Glutamyl-Q tRNA(Asp) synthetase from Yersinia pseudotuberculosis serotype I (strain IP32953).